We begin with the raw amino-acid sequence, 78 residues long: MRSCPKRARGVHWATGAALWCPSRMIFEKISPLQAFVWAVLRLFLKSFRTVFRGAVRAGCGVLACVRAYGFPPYGSKE.

This is an uncharacterized protein from Treponema pallidum (strain Nichols).